The chain runs to 44 residues: Unknown protein 1 (44 aa).

This Lonomia obliqua (Moth) protein is Unknown protein 1.